The following is a 215-amino-acid chain: Thiamine import ATP-binding protein ThiQ (215 aa).

The ABC transporter domain maps to 2–215 (IYLNNVILND…GQISQLQKGV (214 aa)). 32-39 (GESGAGKS) contributes to the ATP binding site.

It belongs to the ABC transporter superfamily. Thiamine importer (TC 3.A.1.19.1) family. The complex is composed of two ATP-binding proteins (ThiQ), two transmembrane proteins (ThiP) and a solute-binding protein (ThiB).

The protein localises to the cell inner membrane. It carries out the reaction thiamine(out) + ATP + H2O = thiamine(in) + ADP + phosphate + H(+). Its function is as follows. Part of the ABC transporter complex ThiBPQ involved in thiamine import. Responsible for energy coupling to the transport system. In Haemophilus influenzae (strain ATCC 51907 / DSM 11121 / KW20 / Rd), this protein is Thiamine import ATP-binding protein ThiQ.